We begin with the raw amino-acid sequence, 458 residues long: Cysteine--tRNA ligase (458 aa).

Cys-27 contacts Zn(2+). The 'HIGH' region signature appears at 29–39; that stretch reads MTVYDYMHIGH. Residues Cys-208, His-233, and Glu-237 each contribute to the Zn(2+) site. The 'KMSKS' region motif lies at 265-269; sequence KMSKS. Lys-268 serves as a coordination point for ATP.

This sequence belongs to the class-I aminoacyl-tRNA synthetase family. In terms of assembly, monomer. The cofactor is Zn(2+).

Its subcellular location is the cytoplasm. The catalysed reaction is tRNA(Cys) + L-cysteine + ATP = L-cysteinyl-tRNA(Cys) + AMP + diphosphate. The protein is Cysteine--tRNA ligase of Coxiella burnetii (strain Dugway 5J108-111).